A 246-amino-acid chain; its full sequence is Transmembrane and ubiquitin-like domain-containing protein 1 (246 aa).

The interval 2 to 30 is required to release iHOPS from membranes; sequence TLIEGVGDEVTVLFSVLACLLVLALAWVS. The helical transmembrane segment at 11-31 threads the bilayer; that stretch reads VTVLFSVLACLLVLALAWVST. A disordered region spans residues 34–101; that stretch reads AEGGDPLPQP…TPPAPDSPQE (68 aa). The segment covering 40–50 has biased composition (pro residues); the sequence is LPQPSGTPTPS. Phosphothreonine is present on Thr71. Ser73 bears the Phosphoserine mark. Thr92 is subject to Phosphothreonine. Residues Ser98 and Ser127 each carry the phosphoserine modification. Residues 103–176 form the Ubiquitin-like domain; it reads LVLRLKFLND…LHCHVSTRVG (74 aa). 2 helical membrane passes run 195 to 215 and 221 to 241; these read IGSLLLPLLLLLLLLLWYCQI and FPLTATLGLAGFTLLLSLLAF.

As to quaternary structure, interacts with EEF1A1, GRIA2, GRIP1, CAMLG, TUBG1. Interacts with NPM1 and CDKN2A; TMUB1 can enhance interaction between NPM1 and CDKN2A and is proposed to bridge the proteins; proposed to be mediated by iHOPS. Interacts with ERLIN2 and AMFR; TMUB1 promotes the interaction of ERLIN2 with AMFR. Processed by regulated intramembrane proteolysis (RIP)in the N-terminus to release iHOPS from membranes. Ubiquitously expressed with highest levels in mammary and thyroid glands, bone marrow and spleen; limited expression in cardiac, pancreatic and ovarian tissues.

Its subcellular location is the membrane. It is found in the postsynaptic cell membrane. It localises to the recycling endosome. The protein localises to the cytoplasm. The protein resides in the nucleus. Its subcellular location is the nucleolus. It is found in the cytoskeleton. It localises to the microtubule organizing center. The protein localises to the centrosome. Its function is as follows. Involved in sterol-regulated ubiquitination and degradation of HMG-CoA reductase HMGCR. Involved in positive regulation of AMPA-selective glutamate receptor GRIA2 recycling to the cell surface. Acts as a negative regulator of hepatocyte growth during regeneration. May contribute to the regulation of translation during cell-cycle progression. May contribute to the regulation of cell proliferation. May be involved in centrosome assembly. Modulates stabilization and nucleolar localization of tumor suppressor CDKN2A and enhances association between CDKN2A and NPM1. The sequence is that of Transmembrane and ubiquitin-like domain-containing protein 1 (TMUB1) from Homo sapiens (Human).